The sequence spans 321 residues: Lipoyl synthase (321 aa).

Residues cysteine 68, cysteine 73, cysteine 79, cysteine 94, cysteine 98, cysteine 101, and serine 308 each contribute to the [4Fe-4S] cluster site. One can recognise a Radical SAM core domain in the interval 80–297; it reads FNHGTATFMI…KALADELGFT (218 aa).

The protein belongs to the radical SAM superfamily. Lipoyl synthase family. The cofactor is [4Fe-4S] cluster.

It is found in the cytoplasm. It carries out the reaction [[Fe-S] cluster scaffold protein carrying a second [4Fe-4S](2+) cluster] + N(6)-octanoyl-L-lysyl-[protein] + 2 oxidized [2Fe-2S]-[ferredoxin] + 2 S-adenosyl-L-methionine + 4 H(+) = [[Fe-S] cluster scaffold protein] + N(6)-[(R)-dihydrolipoyl]-L-lysyl-[protein] + 4 Fe(3+) + 2 hydrogen sulfide + 2 5'-deoxyadenosine + 2 L-methionine + 2 reduced [2Fe-2S]-[ferredoxin]. It participates in protein modification; protein lipoylation via endogenous pathway; protein N(6)-(lipoyl)lysine from octanoyl-[acyl-carrier-protein]: step 2/2. In terms of biological role, catalyzes the radical-mediated insertion of two sulfur atoms into the C-6 and C-8 positions of the octanoyl moiety bound to the lipoyl domains of lipoate-dependent enzymes, thereby converting the octanoylated domains into lipoylated derivatives. The protein is Lipoyl synthase of Shewanella baltica (strain OS223).